The following is a 190-amino-acid chain: Probable calcium-binding protein CML27 (190 aa).

3 consecutive EF-hand domains span residues 27–62, 115–150, and 153–188; these read LNALRLRRVFDLFDRNGDGEITLDEMASALDALGLG, DDEGDMKEAFRVFDEDGDGFISAAELQAVLKKLGLP, and RNLATVQEMICNVDRDCDGRVDFGEFKCMMQGITVW. Positions 40, 42, 44, 46, 51, 128, 130, 132, 139, 166, 168, 170, 172, and 177 each coordinate Ca(2+).

Potential calcium sensor. This is Probable calcium-binding protein CML27 (CML27) from Oryza sativa subsp. japonica (Rice).